The following is a 94-amino-acid chain: DNA-directed RNA polymerase subunit Rpo11 (94 aa).

The protein belongs to the archaeal Rpo11/eukaryotic RPB11/RPC19 RNA polymerase subunit family. As to quaternary structure, part of the RNA polymerase complex.

The protein localises to the cytoplasm. It carries out the reaction RNA(n) + a ribonucleoside 5'-triphosphate = RNA(n+1) + diphosphate. Its function is as follows. DNA-dependent RNA polymerase (RNAP) catalyzes the transcription of DNA into RNA using the four ribonucleoside triphosphates as substrates. This is DNA-directed RNA polymerase subunit Rpo11 from Halobacterium salinarum (strain ATCC 700922 / JCM 11081 / NRC-1) (Halobacterium halobium).